A 95-amino-acid chain; its full sequence is MSDDIQQTEVSGTGVGIVTGKVVSNKMDKSITVLIERKVRHPLYGKQIRRSTKIKAHDENNVCKEGDVVRIIETRPISKTKSWKLVDVVETAEKI.

The protein belongs to the universal ribosomal protein uS17 family. Part of the 30S ribosomal subunit.

In terms of biological role, one of the primary rRNA binding proteins, it binds specifically to the 5'-end of 16S ribosomal RNA. The polypeptide is Small ribosomal subunit protein uS17 (Psychrobacter sp. (strain PRwf-1)).